Consider the following 521-residue polypeptide: GMP synthase [glutamine-hydrolyzing] (521 aa).

The 193-residue stretch at 5-197 (KILILDFGSQ…VLDICGAQPG (193 aa)) folds into the Glutamine amidotransferase type-1 domain. The active-site Nucleophile is the Cys-81. Active-site residues include His-171 and Glu-173. The GMPS ATP-PPase domain occupies 198-390 (WTMPNYIEEA…LGLPREMVYR (193 aa)). 225–231 (SGGVDSS) is an ATP binding site.

In terms of assembly, homodimer.

The catalysed reaction is XMP + L-glutamine + ATP + H2O = GMP + L-glutamate + AMP + diphosphate + 2 H(+). It functions in the pathway purine metabolism; GMP biosynthesis; GMP from XMP (L-Gln route): step 1/1. In terms of biological role, catalyzes the synthesis of GMP from XMP. The protein is GMP synthase [glutamine-hydrolyzing] of Neisseria gonorrhoeae (strain ATCC 700825 / FA 1090).